Here is a 300-residue protein sequence, read N- to C-terminus: Endonuclease III-like protein 1 (300 aa).

A mitochondrion-targeting transit peptide spans 1 to 19 (MNSGVRMVTRSRSRATRIA). The disordered stretch occupies residues 1-53 (MNSGVRMVTRSRSRATRIASEGCREELAPREAAAEGRKSHRPVRHPRRTQKTH). Residues 22–37 (GCREELAPREAAAEGR) show a composition bias toward basic and acidic residues. A compositionally biased stretch (basic residues) spans 38–51 (KSHRPVRHPRRTQK). The region spanning 187–211 (RYEGDIPASVAELVALPGVGPKMAH) is the HhH domain. Lys-208 acts as the Nucleophile; for N-glycosylase activity in catalysis. Residues Cys-278, Cys-285, Cys-288, and Cys-294 each contribute to the [4Fe-4S] cluster site.

The protein belongs to the Nth/MutY family. As to quaternary structure, interacts with YBX1. Interacts with ERCC5/XPG; the interaction stimulates NTHL1 activity and NTHL1 binding to its DNA substrate. [4Fe-4S] cluster is required as a cofactor. Post-translationally, ubiquitinated by TRIM26; leading to proteasomal degradation. Widely expressed.

The protein resides in the nucleus. It is found in the mitochondrion. The enzyme catalyses 2'-deoxyribonucleotide-(2'-deoxyribose 5'-phosphate)-2'-deoxyribonucleotide-DNA = a 3'-end 2'-deoxyribonucleotide-(2,3-dehydro-2,3-deoxyribose 5'-phosphate)-DNA + a 5'-end 5'-phospho-2'-deoxyribonucleoside-DNA + H(+). Functionally, bifunctional DNA N-glycosylase with associated apurinic/apyrimidinic (AP) lyase function that catalyzes the first step in base excision repair (BER), the primary repair pathway for the repair of oxidative DNA damage. The DNA N-glycosylase activity releases the damaged DNA base from DNA by cleaving the N-glycosidic bond, leaving an AP site. The AP lyase activity cleaves the phosphodiester bond 3' to the AP site by a beta-elimination. Primarily recognizes and repairs oxidative base damage of pyrimidines. In Mus musculus (Mouse), this protein is Endonuclease III-like protein 1 (Nthl1).